Reading from the N-terminus, the 301-residue chain is GTPase Era (301 aa).

Residues 4–173 enclose the Era-type G domain; it reads KAGFVALIGK…LECISKYLSP (170 aa). The interval 12 to 19 is G1; the sequence is GKPNAGKS. A GTP-binding site is contributed by 12–19; it reads GKPNAGKS. The G2 stretch occupies residues 38 to 42; the sequence is NATRK. A G3 region spans residues 64-67; that stretch reads DTPG. GTP contacts are provided by residues 64–68 and 122–125; these read DTPGL and SKID. Residues 122 to 125 are G4; it reads SKID. The G5 stretch occupies residues 152–154; sequence LSA. In terms of domain architecture, KH type-2 spans 204 to 280; the sequence is LSDEIPYESD…FLNLQVIAQK (77 aa).

It belongs to the TRAFAC class TrmE-Era-EngA-EngB-Septin-like GTPase superfamily. Era GTPase family. Monomer.

The protein localises to the cytoplasm. Its subcellular location is the cell inner membrane. Functionally, an essential GTPase that binds both GDP and GTP, with rapid nucleotide exchange. Plays a role in 16S rRNA processing and 30S ribosomal subunit biogenesis and possibly also in cell cycle regulation and energy metabolism. In Helicobacter pylori (strain G27), this protein is GTPase Era.